The sequence spans 618 residues: Methylmalonyl-CoA mutase small subunit (618 aa).

This sequence belongs to the methylmalonyl-CoA mutase family. As to quaternary structure, heterodimer of an alpha and a beta chain. Adenosylcob(III)alamin is required as a cofactor.

It carries out the reaction (R)-methylmalonyl-CoA = succinyl-CoA. The protein operates within metabolic intermediate metabolism; propanoyl-CoA degradation; succinyl-CoA from propanoyl-CoA: step 3/3. In terms of biological role, catalyzes the isomerization of succinyl-CoA to methylmalonyl-CoA during synthesis of propionate from tricarboxylic acid-cycle intermediates. This is Methylmalonyl-CoA mutase small subunit (mutA) from Porphyromonas gingivalis (strain ATCC BAA-308 / W83).